We begin with the raw amino-acid sequence, 664 residues long: Methionine--tRNA ligase (664 aa).

A 'HIGH' region motif is present at residues proline 13–histidine 23. 4 residues coordinate Zn(2+): cysteine 144, cysteine 147, cysteine 156, and cysteine 160. The 'KMSKS' region signature appears at lysine 327–serine 331. Lysine 330 is a binding site for ATP. The tRNA-binding domain occupies glutamate 566–arginine 664.

Belongs to the class-I aminoacyl-tRNA synthetase family. MetG type 1 subfamily. As to quaternary structure, homodimer. Requires Zn(2+) as cofactor.

The protein localises to the cytoplasm. The enzyme catalyses tRNA(Met) + L-methionine + ATP = L-methionyl-tRNA(Met) + AMP + diphosphate. Functionally, is required not only for elongation of protein synthesis but also for the initiation of all mRNA translation through initiator tRNA(fMet) aminoacylation. In Methanospirillum hungatei JF-1 (strain ATCC 27890 / DSM 864 / NBRC 100397 / JF-1), this protein is Methionine--tRNA ligase.